Reading from the N-terminus, the 417-residue chain is Phosphoglycerate kinase 1 (417 aa).

Residue serine 2 is modified to N-acetylserine. Phosphoserine occurs at positions 2 and 4. Lysine 6 carries the N6-succinyllysine modification. Residue lysine 11 is modified to N6-acetyllysine. (2R)-3-phosphoglycerate is bound by residues valine 23, aspartate 24, phenylalanine 25, asparagine 26, glutamine 38, and arginine 39. The interval 38–43 (QRIKAA) is mitochondrial targeting region exposed following cis-trans isomerization by PIN1 and recognized by the TOM complex for mitochondrial translocation of the protein. At lysine 48 the chain carries N6-acetyllysine; alternate. Lysine 48 bears the N6-succinyllysine; alternate mark. (2R)-3-phosphoglycerate contacts are provided by serine 62, histidine 63, glycine 65, and arginine 66. An N6-acetyllysine modification is found at lysine 75. Phosphotyrosine is present on tyrosine 76. An N6-acetyllysine mark is found at lysine 86 and lysine 91. Lysine 97 bears the N6-acetyllysine; alternate mark. Lysine 97 is subject to N6-(2-hydroxyisobutyryl)lysine; alternate. (2R)-3-phosphoglycerate-binding residues include leucine 122 and arginine 123. The residue at position 131 (lysine 131) is an N6-acetyllysine; alternate. Lysine 131 carries the N6-malonyllysine; alternate modification. Lysine 146 carries the N6-acetyllysine modification. (2R)-3-phosphoglycerate-binding residues include histidine 170 and arginine 171. Lysine 191 is subject to N6-succinyllysine. Tyrosine 196 carries the phosphotyrosine modification. The residue at position 199 (lysine 199) is an N6-acetyllysine. A Phosphoserine modification is found at serine 203. Glycine 214 contributes to the ADP binding site. Glycine 214 serves as a coordination point for CDP. The AMP site is built by alanine 215 and lysine 216. ATP is bound at residue alanine 215. Position 215 (alanine 215) interacts with Mg(2+). Lysine 216 is subject to N6-(2-hydroxyisobutyryl)lysine. Residues alanine 218 and aspartate 219 each contribute to the Mg(2+) site. Position 219 (aspartate 219) interacts with CDP. Lysine 220 serves as a coordination point for AMP. ATP is bound at residue lysine 220. Lysine 220 carries the post-translational modification N6-(2-hydroxyisobutyryl)lysine. Glycine 238 provides a ligand contact to ADP. Residue glycine 238 coordinates CDP. Position 239 (glycine 239) interacts with AMP. Glycine 239 is a binding site for ATP. Residues lysine 267 and lysine 291 each carry the N6-acetyllysine modification. Glycine 313 serves as a coordination point for AMP. Residue glycine 313 coordinates ATP. Lysine 323 carries the post-translational modification N6-(2-hydroxyisobutyryl)lysine. Glycine 338, valine 340, and phenylalanine 343 together coordinate CDP. Phenylalanine 343 serves as a coordination point for ADP. Glutamate 344 is an AMP binding site. Residue glutamate 344 coordinates ATP. Lysine 361 bears the N6-acetyllysine mark. ATP is bound by residues aspartate 375 and threonine 376. Residue aspartate 375 participates in Mg(2+) binding.

This sequence belongs to the phosphoglycerate kinase family. As to quaternary structure, monomer. Interacts with kinase MAPK1/ERK2; the interaction is direct, occurs under hypoxic conditions, and promotes its interaction with PIN1. Interacts with peptidyl-prolyl cis-trans isomerase PIN1; the interaction is direct, occurs under hypoxic conditions, and targets the protein to the mitochondrion by promoting interactions with the TOM complex. Interacts with mitochondrial circRNA mcPGK1 (via its 2nd stem-loop); the interaction is direct and targets the protein to the mitochondrion by promoting interactions with the TOM complex. Interacts with pyruvate dehydrogenase kinase PDK1; the interaction is direct, occurs under hypoxic conditions and leads to PDK1-mediated inhibition of pyruvate dehydrogenase complex activity. Mg(2+) serves as cofactor. In terms of processing, phosphorylated at Ser-203 by MAPK1/ERK2 under hypoxic conditions, which promotes its mitochondrial targeting. Testis, lung, brain, skeletal muscle, liver, intestine, and kidney (at protein level).

The protein localises to the cytoplasm. Its subcellular location is the cytosol. It is found in the mitochondrion matrix. It carries out the reaction (2R)-3-phosphoglycerate + ATP = (2R)-3-phospho-glyceroyl phosphate + ADP. It catalyses the reaction L-seryl-[protein] + ATP = O-phospho-L-seryl-[protein] + ADP + H(+). It participates in carbohydrate degradation; glycolysis; pyruvate from D-glyceraldehyde 3-phosphate: step 2/5. In terms of biological role, catalyzes one of the two ATP producing reactions in the glycolytic pathway via the reversible conversion of 1,3-diphosphoglycerate to 3-phosphoglycerate. Both L- and D- forms of purine and pyrimidine nucleotides can be used as substrates, but the activity is much lower on pyrimidines. In addition to its role as a glycolytic enzyme, it seems that PGK-1 acts as a polymerase alpha cofactor protein (primer recognition protein). Acts as a protein kinase when localized to the mitochondrion where it phosphorylates pyruvate dehydrogenase kinase PDK1 to inhibit pyruvate dehydrogenase complex activity and suppress the formation of acetyl-coenzyme A from pyruvate, and consequently inhibit oxidative phosphorylation and promote glycolysis. May play a role in sperm motility. The protein is Phosphoglycerate kinase 1 (Pgk1) of Mus musculus (Mouse).